We begin with the raw amino-acid sequence, 598 residues long: Polypeptide N-acetylgalactosaminyltransferase 17 (598 aa).

Topologically, residues 1–6 (MASLRR) are cytoplasmic. The chain crosses the membrane as a helical; Signal-anchor for type II membrane protein span at residues 7–27 (VKVLLVLNLIAVAGFVLFLAK). The Lumenal portion of the chain corresponds to 28-598 (CRPIAVRSGD…QRWTIKNSIK (571 aa)). N50 carries N-linked (GlcNAc...) asparagine glycosylation. Cystine bridges form between C142–C373 and C364–C443. The catalytic subdomain A stretch occupies residues 151 to 262 (LPQISIIFIF…AGWAEPVLSR (112 aa)). Residues D192 and R223 each contribute to the substrate site. Mn(2+)-binding residues include D246, H248, and H378. The catalytic subdomain B stretch occupies residues 319–381 (PIRTPAMIGC…PCSRVAHIER (63 aa)). 2 residues coordinate substrate: R381 and Y386. Residues N461 and N486 are each glycosylated (N-linked (GlcNAc...) asparagine). The 130-residue stretch at 465-594 (AYGELRNNKA…SCTGQRWTIK (130 aa)) folds into the Ricin B-type lectin domain. 3 disulfide bridges follow: C478–C494, C526–C541, and C568–C586.

The protein belongs to the glycosyltransferase 2 family. GalNAc-T subfamily. It depends on Mn(2+) as a cofactor. Highly expressed in brain and heart. Weakly expressed in kidney, liver, lung and spleen.

It is found in the golgi apparatus membrane. It carries out the reaction L-seryl-[protein] + UDP-N-acetyl-alpha-D-galactosamine = a 3-O-[N-acetyl-alpha-D-galactosaminyl]-L-seryl-[protein] + UDP + H(+). The catalysed reaction is L-threonyl-[protein] + UDP-N-acetyl-alpha-D-galactosamine = a 3-O-[N-acetyl-alpha-D-galactosaminyl]-L-threonyl-[protein] + UDP + H(+). The protein operates within protein modification; protein glycosylation. In terms of biological role, may catalyze the initial reaction in O-linked oligosaccharide biosynthesis, the transfer of an N-acetyl-D-galactosamine residue to a serine or threonine residue on the protein receptor. The chain is Polypeptide N-acetylgalactosaminyltransferase 17 from Homo sapiens (Human).